The sequence spans 232 residues: Large ribosomal subunit protein uL1 (232 aa).

Belongs to the universal ribosomal protein uL1 family. In terms of assembly, part of the 50S ribosomal subunit.

Functionally, binds directly to 23S rRNA. The L1 stalk is quite mobile in the ribosome, and is involved in E site tRNA release. Protein L1 is also a translational repressor protein, it controls the translation of the L11 operon by binding to its mRNA. In Bacillus velezensis (strain DSM 23117 / BGSC 10A6 / LMG 26770 / FZB42) (Bacillus amyloliquefaciens subsp. plantarum), this protein is Large ribosomal subunit protein uL1.